A 274-amino-acid polypeptide reads, in one-letter code: Putative hydro-lyase Veis_4744 (274 aa).

Belongs to the D-glutamate cyclase family.

This chain is Putative hydro-lyase Veis_4744, found in Verminephrobacter eiseniae (strain EF01-2).